Reading from the N-terminus, the 139-residue chain is Putative nickel-responsive regulator (139 aa).

Residues histidine 79, histidine 90, histidine 92, and cysteine 98 each contribute to the Ni(2+) site.

Belongs to the transcriptional regulatory CopG/NikR family. The cofactor is Ni(2+).

Functionally, transcriptional regulator. This chain is Putative nickel-responsive regulator, found in Nitratidesulfovibrio vulgaris (strain ATCC 29579 / DSM 644 / CCUG 34227 / NCIMB 8303 / VKM B-1760 / Hildenborough) (Desulfovibrio vulgaris).